A 244-amino-acid polypeptide reads, in one-letter code: High frequency lysogenization protein HflD homolog (244 aa).

Belongs to the HflD family.

The protein resides in the cytoplasm. It localises to the cell inner membrane. The protein is High frequency lysogenization protein HflD homolog of Acinetobacter baumannii (strain ATCC 17978 / DSM 105126 / CIP 53.77 / LMG 1025 / NCDC KC755 / 5377).